Reading from the N-terminus, the 521-residue chain is UDP-N-acetylmuramoyl-L-alanyl-D-glutamate--2,6-diaminopimelate ligase (521 aa).

Ser33 provides a ligand contact to UDP-N-acetyl-alpha-D-muramoyl-L-alanyl-D-glutamate. 116-122 (GTNGKTT) is a binding site for ATP. Residues 158 to 159 (TT), Ser185, Gln191, and Arg193 contribute to the UDP-N-acetyl-alpha-D-muramoyl-L-alanyl-D-glutamate site. N6-carboxylysine is present on Lys225. Meso-2,6-diaminopimelate-binding positions include Arg409, 433–436 (DNPR), Gly483, and Glu487. The short motif at 433–436 (DNPR) is the Meso-diaminopimelate recognition motif element.

It belongs to the MurCDEF family. MurE subfamily. Requires Mg(2+) as cofactor. Post-translationally, carboxylation is probably crucial for Mg(2+) binding and, consequently, for the gamma-phosphate positioning of ATP.

It is found in the cytoplasm. The catalysed reaction is UDP-N-acetyl-alpha-D-muramoyl-L-alanyl-D-glutamate + meso-2,6-diaminopimelate + ATP = UDP-N-acetyl-alpha-D-muramoyl-L-alanyl-gamma-D-glutamyl-meso-2,6-diaminopimelate + ADP + phosphate + H(+). Its pathway is cell wall biogenesis; peptidoglycan biosynthesis. Its function is as follows. Catalyzes the addition of meso-diaminopimelic acid to the nucleotide precursor UDP-N-acetylmuramoyl-L-alanyl-D-glutamate (UMAG) in the biosynthesis of bacterial cell-wall peptidoglycan. This chain is UDP-N-acetylmuramoyl-L-alanyl-D-glutamate--2,6-diaminopimelate ligase, found in Nitrosomonas europaea (strain ATCC 19718 / CIP 103999 / KCTC 2705 / NBRC 14298).